Reading from the N-terminus, the 267-residue chain is tRNA-cytidine(32) 2-sulfurtransferase (267 aa).

The PP-loop motif motif lies at 37-42; the sequence is SGGKDS. Residues Cys112, Cys115, and Cys203 each contribute to the [4Fe-4S] cluster site.

Belongs to the TtcA family. Homodimer. Mg(2+) serves as cofactor. It depends on [4Fe-4S] cluster as a cofactor.

The protein resides in the cytoplasm. The enzyme catalyses cytidine(32) in tRNA + S-sulfanyl-L-cysteinyl-[cysteine desulfurase] + AH2 + ATP = 2-thiocytidine(32) in tRNA + L-cysteinyl-[cysteine desulfurase] + A + AMP + diphosphate + H(+). It participates in tRNA modification. Catalyzes the ATP-dependent 2-thiolation of cytidine in position 32 of tRNA, to form 2-thiocytidine (s(2)C32). The sulfur atoms are provided by the cysteine/cysteine desulfurase (IscS) system. The sequence is that of tRNA-cytidine(32) 2-sulfurtransferase from Dichelobacter nodosus (strain VCS1703A).